The following is a 129-amino-acid chain: Small ribosomal subunit protein uS11 (129 aa).

The protein belongs to the universal ribosomal protein uS11 family. Part of the 30S ribosomal subunit. Interacts with proteins S7 and S18. Binds to IF-3.

In terms of biological role, located on the platform of the 30S subunit, it bridges several disparate RNA helices of the 16S rRNA. Forms part of the Shine-Dalgarno cleft in the 70S ribosome. This Caulobacter vibrioides (strain ATCC 19089 / CIP 103742 / CB 15) (Caulobacter crescentus) protein is Small ribosomal subunit protein uS11.